The sequence spans 142 residues: Large ribosomal subunit protein uL11 (142 aa).

Belongs to the universal ribosomal protein uL11 family. As to quaternary structure, part of the ribosomal stalk of the 50S ribosomal subunit. Interacts with L10 and the large rRNA to form the base of the stalk. L10 forms an elongated spine to which L12 dimers bind in a sequential fashion forming a multimeric L10(L12)X complex. Post-translationally, one or more lysine residues are methylated.

Its function is as follows. Forms part of the ribosomal stalk which helps the ribosome interact with GTP-bound translation factors. This is Large ribosomal subunit protein uL11 from Photorhabdus laumondii subsp. laumondii (strain DSM 15139 / CIP 105565 / TT01) (Photorhabdus luminescens subsp. laumondii).